Here is an 828-residue protein sequence, read N- to C-terminus: Periplasmic nitrate reductase (828 aa).

A signal peptide (tat-type signal) is located at residues 1–31; sequence MKLSRRSFMKANAVAAAAAAAGLSVPGVARA. Residues 39-95 enclose the 4Fe-4S Mo/W bis-MGD-type domain; that stretch reads IKWDKAPCRFCGTGCGVLVGTQQGRVVACQGDPDAPVNRGLNCIKGYFLPKIMYGKD. 4 residues coordinate [4Fe-4S] cluster: C46, C49, C53, and C81. Mo-bis(molybdopterin guanine dinucleotide) is bound by residues K83, Q150, N175, C179, 212–219, 243–247, 262–264, M372, Q376, N482, 508–509, K531, D558, and 718–727; these read WGSNMAEM, STFQH, QSD, SD, and TGRVLEHWHT. Substrate is bound at residue F794. Mo-bis(molybdopterin guanine dinucleotide) is bound by residues N802 and K819.

It belongs to the prokaryotic molybdopterin-containing oxidoreductase family. NasA/NapA/NarB subfamily. In terms of assembly, component of the periplasmic nitrate reductase NapAB complex composed of NapA and NapB. [4Fe-4S] cluster is required as a cofactor. Mo-bis(molybdopterin guanine dinucleotide) serves as cofactor. Predicted to be exported by the Tat system. The position of the signal peptide cleavage has not been experimentally proven.

The protein resides in the periplasm. It carries out the reaction 2 Fe(II)-[cytochrome] + nitrate + 2 H(+) = 2 Fe(III)-[cytochrome] + nitrite + H2O. Its function is as follows. Catalytic subunit of the periplasmic nitrate reductase complex NapAB. Receives electrons from NapB and catalyzes the reduction of nitrate to nitrite. The polypeptide is Periplasmic nitrate reductase (Salmonella paratyphi C (strain RKS4594)).